We begin with the raw amino-acid sequence, 113 residues long: Protein USP2 (113 aa).

The signal sequence occupies residues 1–18 (MKITMFFAALSAASGVFA). 6 repeat units span residues 32–37 (IGAGVG), 40–45 (IGAGVG), 46–49 (SYGY), 50–53 (PYGA), 59–65 (LQLLPLR), and 69–75 (LRRLPLR). The segment at 32–45 (IGAGVGIGIGAGVG) is 2 X 6 AA repeats. The tract at residues 46-53 (SYGYPYGA) is 2 X 4 AA approximate tandem repeats. Residues 59–75 (LQLLPLRWLPLRRLPLR) are 2 X 7 AA approximate repeats.

It is found in the secreted. In Puccinia graminis (Black stem rust fungus), this protein is Protein USP2 (USP2).